A 138-amino-acid polypeptide reads, in one-letter code: Large ribosomal subunit protein uL16 (138 aa).

Positions 1 to 19 (MLSPKRTKYRKAHKGRIHG) are enriched in basic residues. A disordered region spans residues 1–21 (MLSPKRTKYRKAHKGRIHGNA).

Belongs to the universal ribosomal protein uL16 family. In terms of assembly, part of the 50S ribosomal subunit.

Functionally, binds 23S rRNA and is also seen to make contacts with the A and possibly P site tRNAs. The chain is Large ribosomal subunit protein uL16 from Granulibacter bethesdensis (strain ATCC BAA-1260 / CGDNIH1).